Consider the following 373-residue polypeptide: MTVAALNKLSALSGSIQKSFSPKLISVGIIGSGNWGTAIAKICGENAKAHPDIFHPQVHMWMYEEKIQHEGKECNLTEVFNTTHENVKYLKGIKCPSNVFANPDIRDVGSRSDILVWVLPHQFVVRICNQLKGCLKKDAVAISCIKGVSVTKDRVRLFSDIIEENTGMYCGVLSGANIASEVAQEKFCETTIGYLPNSSVNPRYTPKTIQALFNRPYFRVNIVEDVPGVALGGALKNIVAVAAGIIDGLELGDNTKSAVMRIGLLEMQKFGRMFFDCKPLTMSEESCGIADLITTCLGGRNHKCAVAFVKTGKPMHVVEQELLDGQKLQGAATAKEVYEFLDNQNKVSEFPLFTAVYRIVYEGLPPNKLLEAI.

Ser15 bears the Phosphoserine mark. NAD(+)-binding positions include 31 to 36, Phe123, Lys146, and Ala179; that span reads GSGNWG. Lys146 is a substrate binding site. Lys236 serves as the catalytic Proton acceptor. 2 residues coordinate NAD(+): Arg300 and Gln329. 300–301 is a binding site for substrate; sequence RN.

This sequence belongs to the NAD-dependent glycerol-3-phosphate dehydrogenase family.

Its subcellular location is the cytoplasm. The catalysed reaction is sn-glycerol 3-phosphate + NAD(+) = dihydroxyacetone phosphate + NADH + H(+). This chain is Glycerol-3-phosphate dehydrogenase [NAD(+)] 2 (gpd2), found in Schizosaccharomyces pombe (strain 972 / ATCC 24843) (Fission yeast).